The chain runs to 601 residues: Alpha-terpineol synthase, chloroplastic (601 aa).

A chloroplast-targeting transit peptide spans 1–47; sequence MSTISIHHVGILRNPLHSKSKRASINKPWSLSLPRSSSASRLVEPCR. Positions 357 and 361 each coordinate Mn(2+). The DDXXD motif signature appears at 357 to 361; it reads DDVYD. 2 homodimerization regions span residues 363–369 and 435–471; these read YGTLDEL and EAEW…ELSL. The Mn(2+) site is built by Asp499 and Glu507.

The protein belongs to the terpene synthase family. In terms of assembly, homodimer. Mn(2+) serves as cofactor. Requires Mg(2+) as cofactor.

It is found in the plastid. The protein resides in the chloroplast. The catalysed reaction is (2E)-geranyl diphosphate + H2O = (S)-alpha-terpineol + diphosphate. The enzyme catalyses (2E)-geranyl diphosphate + H2O = (R)-alpha-terpineol + diphosphate. It functions in the pathway secondary metabolite biosynthesis; terpenoid biosynthesis. Its function is as follows. Involved in the biosynthesis of phenolic monoterpenes natural products. Monoterpene synthase which catalyzes the conversion of geranyl diphosphate (GPP) to alpha-terpineol (isomer is not determined). The protein is Alpha-terpineol synthase, chloroplastic of Thymus caespititius (Cretan thyme).